The primary structure comprises 177 residues: Large ribosomal subunit protein uL6 (177 aa).

The protein belongs to the universal ribosomal protein uL6 family. In terms of assembly, part of the 50S ribosomal subunit.

Functionally, this protein binds to the 23S rRNA, and is important in its secondary structure. It is located near the subunit interface in the base of the L7/L12 stalk, and near the tRNA binding site of the peptidyltransferase center. The sequence is that of Large ribosomal subunit protein uL6 from Rhodospirillum rubrum (strain ATCC 11170 / ATH 1.1.1 / DSM 467 / LMG 4362 / NCIMB 8255 / S1).